A 273-amino-acid polypeptide reads, in one-letter code: Putative phosphoenolpyruvate synthase regulatory protein (273 aa).

Residue 153–160 (AVSRAGKT) coordinates ADP.

The protein belongs to the pyruvate, phosphate/water dikinase regulatory protein family. PSRP subfamily.

The enzyme catalyses [pyruvate, water dikinase] + ADP = [pyruvate, water dikinase]-phosphate + AMP + H(+). The catalysed reaction is [pyruvate, water dikinase]-phosphate + phosphate + H(+) = [pyruvate, water dikinase] + diphosphate. Its function is as follows. Bifunctional serine/threonine kinase and phosphorylase involved in the regulation of the phosphoenolpyruvate synthase (PEPS) by catalyzing its phosphorylation/dephosphorylation. The sequence is that of Putative phosphoenolpyruvate synthase regulatory protein from Xanthomonas axonopodis pv. citri (strain 306).